Consider the following 2813-residue polypeptide: MSPTRLVRVLLALALILPGKLCTKGTVGRSSMARCSLFGGDFINTFDESMYSFAGDCSYLLAGDCQEHSVSLIGGFQNGKRVSLSVYLGEFFDIHLFVNGTMLQGTQSISMPYASNGLYLEAEAGYYKLSSEAYGFVARIDGNGNFQVLLSDRYFNKTCGLCGNFNIFAEDDFRTQEGTLTSDPYDFANSWALSSGEQRCKRVSPPSSPCNVSSDEVQQVLWEQCQLLKSASVFARCHPLVDPEPFVALCERTLCTCVQGMECPCAVLLEYARACAQQGIVLYGWTDHSVCRPACPAGMEYKECVSPCTRTCQSLHVKEVCQEQCVDGCSCPEGQLLDEGHCVGSAECSCVHAGQRYPPGASLLQDCHTCICRNSLWICSNEECPGECLVTGQSHFKSFDNRYFTFSGVCHYLLAQDCQDHTFSVVIETVQCADDLDAVCTRSVTVRLPGHHNSLVKLKHGGGVSMDGQDIQIPLLQGDLRIQHTVMASVRLSYGEDLQMDWDGRGRLLVTLSPAYAGKTCGLCGNYNGNRGDDFVTPAGLAEPLVEDFGNAWKLLGACENLQKQHRDPCSLNPRQARFAEEACALLTSSKFEPCHRAVGPQPYVQNCRYDVCSCSDGRDCLCSAVANYAAACARRGVHIAWREPGFCALSCPQGQVYLQCGTPCNMTCRSLSYPEEDCNEVCLEGCFCPPGLYLDERGDCVPKAQCPCYYDGEIFQPEDIFSDHHTMCYCEDGFMHCTTSGGLGSLLPNPVLSSPRSHRSKRSLSCRPPMVKLVCPADNPRAEGLECAKTCQNYDLQCMSTGCVSGCLCPQGMVRHENRCVALERCPCFHQGQEYAPGETVKIDCNTCVCRDRKWNCTDHVCDATCSAIGMAHYLTFDGLKYLFPGECQYVLVQDYCGSNPGTFRILVGNEGCSYPSVKCKKRVTILVEGGEIELFDGEVNVKKPMKDETHFEVVESGQYVILLLGKALSVVWDHRLSISVTLKRTYQEQVCGLCGNFDGIQNNDFTSSSLQIEEDPVDFGNSWKVNPQCADTKKVPLDSSPAVCHNNIMKQTMVDSSCRILTSDIFQDCNRLVDPEPFLDICIYDTCSCESIGDCTCFCDTIAAYAHVCAQHGKVVAWRTATFCPQNCEERNLHENGYECEWRYNSCAPACPITCQHPEPLACPVQCVEGCHAHCPPGKILDELLQTCIDPEDCPVCEVAGRRLAPGKKIILNPSDPEHCQICHCDGVNFTCQACREPGSLVVPPTEGPIGSTTSYVEDTPEPPLHDFHCSRLLDLVFLLDGSSKLSEDEFEVLKVFVVGMMEHLHISQKRIRVAVVEYHDGSHAYIELKDRKRPSELRRITSQVKYAGSEVASTSEVLKYTLFQIFGKIDRPEASRIALLLMASQEPSRLARNLVRYVQGLKKKKVIVIPVGIGPHASLKQIHLIEKQAPENKAFVFSGVDELEQRRDEIINYLCDLAPEAPAPTQHPPMAQVTVGSELLGVSSPGPKRNSMVLDVVFVLEGSDKIGEANFNKSREFMEEVIQRMDVGQDRIHVTVLQYSYMVTVEYTFSEAQSKGEVLQQVRDIRYRGGNRTNTGLALQYLSEHSFSVSQGDREQVPNLVYMVTGNPASDEIKRMPGDIQVVPIGVGPHANVQELEKIGWPNAPILIHDFEMLPREAPDLVLQRCCSGEGLQIPTLSPTPDCSQPLDVVLLLDGSSSIPASYFDEMKSFTKAFISRANIGPRLTQVSVLQYGSITTIDVPWNVAYEKVHLLSLVDLMQQEGGPSQIGDALSFAVRYVTSEVHGARPGASKAVVILVTDVSVDSVDAAAEAARSNRVTVFPIGIGDRYSEAQLSSLAGPKAGSNMVRLQRIEDLPTVATLGNSFFHKLCSGFDRVCVDEDGNEKRPGDVWTLPDQCHTVTCLPDGQTLLKSHRVNCDRGPRPSCPNGQPPLRVEETCGCRWTCPCVCMGSSTRHIVTFDGQNFKLTGSCSYVLFQNKEQDLEVILHNGACSPGAKETCMKSIEVKHDGLSVELHSDMQMTVNGRLVSIPYVGGDMEVNVYGTIMYEVRFNHLGHIFTFTPQNNEFQLQLSPRTFASKTYGLCGICDENGANDFILRDGTVTTDWKALIQEWTVQQLGKTCQPVPEEQCPVSSSSHCQVLLSELFAECHKVLAPATFYAMCQPDSCHPKKVCEAIALYAHLCRTKGVCVDWRRANFCAMSCPPSLVYNHCEHGCPRLCEGNTSSCGDQPSEGCFCPPNQVMLEGSCVPEEACTQCISEDGVRHQFLETWVPAHQPCQICTCLSGRKVNCTLQPCPTARAPTCGPCEVARLRQNAEQCCPEYECVCDLVSCDLPPVPPCEDGLQMTLTNPGECRPNFTCACRKDECRRESPPSCPPHRTLALRKTQCCDEYECACNCVNSTVSCPLGYLASAVTNDCGCTTTTCFPDKVCVHRGTIYPVGQFWEEACDVCTCTDLEDSVMGLRVAQCSQKPCEDNCLSGFTYVLHEGECCGRCLPSACEVVIGSPRGDAQSHWKNVGSHWASPDNPCLINECVRVKEEVFVQQRNVSCPQLNVPTCPTGFQLSCKTSECCPTCHCEPLEACLLNGTIIGPGKSLMIDVCTTCRCTVQVGVISGFKLECRKTTCEACPLGYKEEKNQGECCGRCLPIACTIQLRGGQIMTLKRDETIQDGCDSHFCKVNERGEYIWEKRVTGCPPFDEHKCLAEGGKIMKIPGTCCDTCEEPECKDIIAKLQRVKVGDCKSEEEVDIHYCEGKCASKAVYSIHMEDVQDQCSCCSPTQTEPMQVPLRCTNGSLIYHEILNAMQCRCSPRKCSK.

Residues 1–22 (MSPTRLVRVLLALALILPGKLC) form the signal peptide. Residues 23–763 (TKGTVGRSSM…SSPRSHRSKR (741 aa)) constitute a propeptide that is removed on maturation. Residues 33–201 (ARCSLFGGDF…ALSSGEQRCK (169 aa)) enclose the VWFD 1 domain. 2 cysteine pairs are disulfide-bonded: C35-C162 and C57-C200. N-linked (GlcNAc...) asparagine glycosylation is found at N99, N156, and N211. In terms of domain architecture, TIL 1 spans 295 to 348 (CPAGMEYKECVSPCTRTCQSLHVKEVCQEQCVDGCSCPEGQLLDEGHCVGSAEC). The 175-residue stretch at 386-560 (GECLVTGQSH…NAWKLLGACE (175 aa)) folds into the VWFD 2 domain. Disulfide bonds link C388/C524, C410/C559, and C432/C440. Residues 531-533 (RGD) carry the Cell attachment site motif. TIL domains are found at residues 652–707 (CPQG…KAQC) and 776–827 (CPAD…LERC). N-linked (GlcNAc...) asparagine glycosylation occurs at N666. The Cell attachment site motif lies at 698-700 (RGD). Residues 764–787 (SLSCRPPMVKLVCPADNPRAEGLE) form an amino-terminal region. Cystine bridges form between C767–C808, C776–C804, and C810–C821. The segment at 788-833 (CAKTCQNYDLQCMSTGCVSGCLCPQGMVRHENRCVALERCPCFHQG) is E1. Positions 826–853 (RCPCFHQGQEYAPGETVKIDCNTCVCRD) are CX. N-linked (GlcNAc...) asparagine glycosylation is present at N857. The VWFD 3 domain maps to 865–1032 (ATCSAIGMAH…NSWKVNPQCA (168 aa)). 11 disulfides stabilise this stretch: C867/C996, C889/C1031, C898/C993, C914/C921, C1060/C1084, C1071/C1111, C1089/C1091, C1126/C1130, C1149/C1169, C1153/C1165, and C1196/C1199. Residues 1146–1196 (YNSCAPACPITCQHPEPLACPVQCVEGCHAHCPPGKILDELLQTCIDPEDC) enclose the TIL 4 domain. A glycan (N-linked (GlcNAc...) asparagine) is linked at N1231. Intrachain disulfides connect C1234-C1237 and C1272-C1458. VWFA domains lie at 1277–1453 (DLVF…RDEI) and 1498–1665 (DVVF…PDLV). 2 N-linked (GlcNAc...) asparagine glycosylation sites follow: N1515 and N1574. Intrachain disulfides connect C1669-C1670, C1686-C1872, C1879-C1904, C1899-C1940, C1927-C2088, C1950-C2085, C1972-C2123, and C1993-C2001. The 181-residue stretch at 1691 to 1871 (DVVLLLDGSS…TLGNSFFHKL (181 aa)) folds into the VWFA 3 domain. The 177-residue stretch at 1948-2124 (CVCMGSSTRH…TVQQLGKTCQ (177 aa)) folds into the VWFD 4 domain. An E2 region spans residues 2216-2261 (CPRLCEGNTSSCGDQPSEGCFCPPNQVMLEGSCVPEEACTQCISED). N-linked (GlcNAc...) asparagine glycosylation is found at N2223, N2290, N2357, and N2400. A VWFC 1 domain is found at 2255–2328 (TQCISEDGVR…CCPEYECVCD (74 aa)). One can recognise a VWFC 2 domain in the interval 2429–2495 (KVCVHRGTIY…HEGECCGRCL (67 aa)). The short motif at 2507 to 2509 (RGD) is the Cell attachment site element. Residues N2546 and N2585 are each glycosylated (N-linked (GlcNAc...) asparagine). Residues 2580–2645 (EACLLNGTII…NQGECCGRCL (66 aa)) form the VWFC 3 domain. 4 cysteine pairs are disulfide-bonded: C2724-C2774, C2739-C2788, C2750-C2804, and C2754-C2806. The region spanning 2724–2812 (CKDIIAKLQR…QCRCSPRKCS (89 aa)) is the CTCK domain. Residue N2790 is glycosylated (N-linked (GlcNAc...) asparagine).

As to quaternary structure, multimeric. Interacts with F8. Post-translationally, all cysteine residues are involved in intrachain or interchain disulfide bonds. N- and O-glycosylated. As to expression, plasma.

The protein localises to the secreted. The protein resides in the extracellular space. It localises to the extracellular matrix. Important in the maintenance of hemostasis, it promotes adhesion of platelets to the sites of vascular injury by forming a molecular bridge between sub-endothelial collagen matrix and platelet-surface receptor complex, glycoprotein Ibalpha/IX/V. Also acts as a chaperone for coagulation factor VIII, delivering it to the site of injury, stabilizing its heterodimeric structure and protecting it from premature clearance from plasma. The chain is von Willebrand factor (VWF) from Canis lupus familiaris (Dog).